A 231-amino-acid chain; its full sequence is 2-C-methyl-D-erythritol 4-phosphate cytidylyltransferase (231 aa).

Belongs to the IspD/TarI cytidylyltransferase family. IspD subfamily.

The catalysed reaction is 2-C-methyl-D-erythritol 4-phosphate + CTP + H(+) = 4-CDP-2-C-methyl-D-erythritol + diphosphate. It functions in the pathway isoprenoid biosynthesis; isopentenyl diphosphate biosynthesis via DXP pathway; isopentenyl diphosphate from 1-deoxy-D-xylulose 5-phosphate: step 2/6. Catalyzes the formation of 4-diphosphocytidyl-2-C-methyl-D-erythritol from CTP and 2-C-methyl-D-erythritol 4-phosphate (MEP). This Shewanella pealeana (strain ATCC 700345 / ANG-SQ1) protein is 2-C-methyl-D-erythritol 4-phosphate cytidylyltransferase.